The primary structure comprises 247 residues: Triosephosphate isomerase (247 aa).

The substrate site is built by Asn10 and Lys12. His94 serves as the catalytic Electrophile. The active-site Proton acceptor is the Glu164.

Belongs to the triosephosphate isomerase family. In terms of assembly, homodimer.

The enzyme catalyses D-glyceraldehyde 3-phosphate = dihydroxyacetone phosphate. It participates in carbohydrate biosynthesis; gluconeogenesis. The protein operates within carbohydrate degradation; glycolysis; D-glyceraldehyde 3-phosphate from glycerone phosphate: step 1/1. This chain is Triosephosphate isomerase (Tpi), found in Drosophila simulans (Fruit fly).